The sequence spans 324 residues: Ribonucleoside-diphosphate reductase subunit beta nrdF2 (324 aa).

Residues Glu-103 and His-106 each coordinate Fe cation. Tyr-110 is an active-site residue. 3 residues coordinate Fe cation: Glu-163, Glu-197, and His-200.

This sequence belongs to the ribonucleoside diphosphate reductase small chain family. As to quaternary structure, tetramer of two alpha and two beta subunits. Requires Fe cation as cofactor.

The enzyme catalyses a 2'-deoxyribonucleoside 5'-diphosphate + [thioredoxin]-disulfide + H2O = a ribonucleoside 5'-diphosphate + [thioredoxin]-dithiol. Provides the precursors necessary for DNA synthesis. Catalyzes the biosynthesis of deoxyribonucleotides from the corresponding ribonucleotides. The protein is Ribonucleoside-diphosphate reductase subunit beta nrdF2 (nrdF2) of Mycobacterium tuberculosis (strain CDC 1551 / Oshkosh).